The following is a 398-amino-acid chain: Phosphoglycerate kinase (398 aa).

Residues 21–23, Arg36, 59–62, Arg119, and Arg157 contribute to the substrate site; these read DFN and HLGR. Residues Lys208, Gly296, Glu327, and 354 to 357 contribute to the ATP site; that span reads GGDS.

This sequence belongs to the phosphoglycerate kinase family. Monomer.

Its subcellular location is the cytoplasm. The enzyme catalyses (2R)-3-phosphoglycerate + ATP = (2R)-3-phospho-glyceroyl phosphate + ADP. The protein operates within carbohydrate degradation; glycolysis; pyruvate from D-glyceraldehyde 3-phosphate: step 2/5. This chain is Phosphoglycerate kinase (pgk), found in Streptococcus pyogenes serotype M1.